Here is a 295-residue protein sequence, read N- to C-terminus: Putative aquaporin-12A (295 aa).

Residues 1-21 (MAGLNVSLSFFFATFALCEAA) traverse the membrane as a helical segment. The Extracellular segment spans residues 22–54 (RRASKALLPVGAYEVFAREAMRTLVELGPWAGD). Residues 55–75 (FGPDLLLTLLFLLFLAHGVTL) traverse the membrane as a helical segment. Residues 76-99 (DGASANPTVSLQEFLMAEQSLPGT) are Cytoplasmic-facing. Residues 77-114 (GASANPTVSLQEFLMAEQSLPGTLLKLAAQGLGMQAAC) constitute an intramembrane region (discontinuously helical). The short motif at 81–83 (NPT) is the NPA 1 element. A helical membrane pass occupies residues 100–126 (LLKLAAQGLGMQAACTLMRLCWAWELS). Residues 127 to 145 (DLHLLQSLMAQSCSSALRT) lie on the Extracellular side of the membrane. The chain crosses the membrane as a helical span at residues 146-166 (SVPHGALVEAACAFCFHLTLL). The Cytoplasmic segment spans residues 167–178 (HLRHSPPAYSGP). The helical transmembrane segment at 179–199 (AVALLVTVTAYTAGPFTSAFF) threads the bilayer. Positions 195 to 206 (TSAFFNPALAAS) form an intramembrane region, discontinuously helical. The short motif at 200–202 (NPA) is the NPA 2 element. Residues 200–215 (NPALAASVTFACSGHT) lie on the Extracellular side of the membrane. The chain crosses the membrane as a helical span at residues 216 to 236 (LLEYVQVYWLGPLTGMVLAVL). Residues 237-295 (LHQGRLPHLFQRNLFYGQKNKYRAPRGKPAPASGDTQTPAKGSSVREPGRSGVEGPHSS) lie on the Cytoplasmic side of the membrane. The segment at 257–295 (KYRAPRGKPAPASGDTQTPAKGSSVREPGRSGVEGPHSS) is disordered.

It belongs to the MIP/aquaporin (TC 1.A.8) family. AQP11/AQP12 subfamily. As to quaternary structure, homotetramer; each monomer provides an independent water pore. In terms of tissue distribution, restricted to the pancreas.

The protein resides in the membrane. The catalysed reaction is H2O(in) = H2O(out). Its function is as follows. Putative aquaporin. Could form homotetrameric transmembrane channels, with each monomer independently mediating water transport across the plasma membrane along its osmotic gradient. The sequence is that of Putative aquaporin-12A from Homo sapiens (Human).